Consider the following 124-residue polypeptide: T cell receptor beta variable 13 (124 aa).

An N-terminal signal peptide occupies residues 1–31; it reads MLSPDLPDSAWNTRLLCRVMLCLLGAGSVAA. An Ig-like domain is found at 32-124; that stretch reads GVIQSPRHLI…SALYFCASSL (93 aa). Residues Cys-52 and Cys-120 are joined by a disulfide bond. Asn-106 carries an N-linked (GlcNAc...) asparagine glycan.

As to quaternary structure, alpha-beta TR is a heterodimer composed of an alpha and beta chain; disulfide-linked. The alpha-beta TR is associated with the transmembrane signaling CD3 coreceptor proteins to form the TR-CD3 (TcR or TCR). The assembly of alpha-beta TR heterodimers with CD3 occurs in the endoplasmic reticulum where a single alpha-beta TR heterodimer associates with one CD3D-CD3E heterodimer, one CD3G-CD3E heterodimer and one CD247 homodimer forming a stable octameric structure. CD3D-CD3E and CD3G-CD3E heterodimers preferentially associate with TR alpha and TR beta chains, respectively. The association of the CD247 homodimer is the last step of TcR assembly in the endoplasmic reticulum and is required for transport to the cell surface.

Its subcellular location is the cell membrane. Functionally, v region of the variable domain of T cell receptor (TR) beta chain that participates in the antigen recognition. Alpha-beta T cell receptors are antigen specific receptors which are essential to the immune response and are present on the cell surface of T lymphocytes. Recognize peptide-major histocompatibility (MH) (pMH) complexes that are displayed by antigen presenting cells (APC), a prerequisite for efficient T cell adaptive immunity against pathogens. Binding of alpha-beta TR to pMH complex initiates TR-CD3 clustering on the cell surface and intracellular activation of LCK that phosphorylates the ITAM motifs of CD3G, CD3D, CD3E and CD247 enabling the recruitment of ZAP70. In turn ZAP70 phosphorylates LAT, which recruits numerous signaling molecules to form the LAT signalosome. The LAT signalosome propagates signal branching to three major signaling pathways, the calcium, the mitogen-activated protein kinase (MAPK) kinase and the nuclear factor NF-kappa-B (NF-kB) pathways, leading to the mobilization of transcription factors that are critical for gene expression and essential for T cell growth and differentiation. The T cell repertoire is generated in the thymus, by V-(D)-J rearrangement. This repertoire is then shaped by intrathymic selection events to generate a peripheral T cell pool of self-MH restricted, non-autoaggressive T cells. Post-thymic interaction of alpha-beta TR with the pMH complexes shapes TR structural and functional avidity. This is T cell receptor beta variable 13 from Homo sapiens (Human).